The chain runs to 149 residues: Protein-export protein SecB 2 (149 aa).

Belongs to the SecB family. In terms of assembly, homotetramer, a dimer of dimers. One homotetramer interacts with 1 SecA dimer.

Its subcellular location is the cytoplasm. Functionally, one of the proteins required for the normal export of preproteins out of the cell cytoplasm. It is a molecular chaperone that binds to a subset of precursor proteins, maintaining them in a translocation-competent state. It also specifically binds to its receptor SecA. The sequence is that of Protein-export protein SecB 2 from Francisella tularensis subsp. tularensis (strain FSC 198).